We begin with the raw amino-acid sequence, 142 residues long: Putative pre-16S rRNA nuclease (142 aa).

Belongs to the YqgF nuclease family.

It is found in the cytoplasm. Functionally, could be a nuclease involved in processing of the 5'-end of pre-16S rRNA. This is Putative pre-16S rRNA nuclease from Staphylococcus carnosus (strain TM300).